The following is a 417-amino-acid chain: Conserved oligomeric Golgi complex subunit 1 (417 aa).

Met1 carries the N-acetylmethionine modification. A Phosphoserine modification is found at Ser305.

The protein belongs to the COG1 family. Component of the conserved oligomeric Golgi (COG or Sec34/Sec35) complex which consists of eight different proteins COG1-COG8.

It localises to the golgi apparatus membrane. Acts as essential component of the peripheral membrane COG complex that is involved in intra-Golgi protein trafficking. COG is located at the cis-Golgi, and regulates tethering of retrograde intra-Golgi vesicles and possibly a number of other membrane trafficking events. The protein is Conserved oligomeric Golgi complex subunit 1 (COG1) of Saccharomyces cerevisiae (strain ATCC 204508 / S288c) (Baker's yeast).